The primary structure comprises 575 residues: Dihydroxy-acid dehydratase (575 aa).

Residues 1–25 (MPTTDSARAADIKQPDIKPRSRDVT) form a disordered region. Basic and acidic residues predominate over residues 8–25 (RAADIKQPDIKPRSRDVT). C64 is a binding site for [2Fe-2S] cluster. D96 is a binding site for Mg(2+). Position 137 (C137) interacts with [2Fe-2S] cluster. 2 residues coordinate Mg(2+): D138 and K139. At K139 the chain carries N6-carboxylysine. C214 contacts [2Fe-2S] cluster. Position 465 (E465) interacts with Mg(2+). Catalysis depends on S491, which acts as the Proton acceptor.

This sequence belongs to the IlvD/Edd family. In terms of assembly, homodimer. The cofactor is [2Fe-2S] cluster. It depends on Mg(2+) as a cofactor.

The enzyme catalyses (2R)-2,3-dihydroxy-3-methylbutanoate = 3-methyl-2-oxobutanoate + H2O. The catalysed reaction is (2R,3R)-2,3-dihydroxy-3-methylpentanoate = (S)-3-methyl-2-oxopentanoate + H2O. It participates in amino-acid biosynthesis; L-isoleucine biosynthesis; L-isoleucine from 2-oxobutanoate: step 3/4. It functions in the pathway amino-acid biosynthesis; L-valine biosynthesis; L-valine from pyruvate: step 3/4. In terms of biological role, functions in the biosynthesis of branched-chain amino acids. Catalyzes the dehydration of (2R,3R)-2,3-dihydroxy-3-methylpentanoate (2,3-dihydroxy-3-methylvalerate) into 2-oxo-3-methylpentanoate (2-oxo-3-methylvalerate) and of (2R)-2,3-dihydroxy-3-methylbutanoate (2,3-dihydroxyisovalerate) into 2-oxo-3-methylbutanoate (2-oxoisovalerate), the penultimate precursor to L-isoleucine and L-valine, respectively. In Mycolicibacterium paratuberculosis (strain ATCC BAA-968 / K-10) (Mycobacterium paratuberculosis), this protein is Dihydroxy-acid dehydratase.